We begin with the raw amino-acid sequence, 274 residues long: WIMGHMVNAIEQVDEFLDLGANAIEFDIDFDKDGIAQITHHGIPCDCGRKCTKKAIFTEYLDNIRQVTTPDDPKFREQLVLLALDLKLQRISSAKAYRAGEDVAKKLLDHYWQRGNSRARAYILLNIPLVEDYEFIRAFKDTLKNEGYESYNDKVGINSAGNEDLDKIRDVLEILGIHKQVWQADGITSCFARGTERLKEALEKRDTPGYNYINKVYAWTLVRKSIMRRSLRLGVDGVMSNNPDRVIKVLKEKEFADKFRLATYNDNPWEKFRG.

The active site involves His-5. Positions 25 and 27 each coordinate Mg(2+). The Nucleophile role is filled by His-41. 2 disulfides stabilise this stretch: Cys-45–Cys-51 and Cys-47–Cys-190. Residue Asp-85 participates in Mg(2+) binding.

This sequence belongs to the arthropod phospholipase D family. Class II subfamily. The cofactor is Mg(2+). Expressed by the venom gland.

It is found in the secreted. It carries out the reaction an N-(acyl)-sphingosylphosphocholine = an N-(acyl)-sphingosyl-1,3-cyclic phosphate + choline. It catalyses the reaction an N-(acyl)-sphingosylphosphoethanolamine = an N-(acyl)-sphingosyl-1,3-cyclic phosphate + ethanolamine. The enzyme catalyses a 1-acyl-sn-glycero-3-phosphocholine = a 1-acyl-sn-glycero-2,3-cyclic phosphate + choline. The catalysed reaction is a 1-acyl-sn-glycero-3-phosphoethanolamine = a 1-acyl-sn-glycero-2,3-cyclic phosphate + ethanolamine. Its function is as follows. Dermonecrotic toxins cleave the phosphodiester linkage between the phosphate and headgroup of certain phospholipids (sphingolipid and lysolipid substrates), forming an alcohol (often choline) and a cyclic phosphate. This toxin acts on sphingomyelin (SM). It may also act on ceramide phosphoethanolamine (CPE), lysophosphatidylcholine (LPC) and lysophosphatidylethanolamine (LPE), but not on lysophosphatidylserine (LPS), and lysophosphatidylglycerol (LPG). It acts by transphosphatidylation, releasing exclusively cyclic phosphate products as second products. Induces dermonecrosis, hemolysis, increased vascular permeability, edema, inflammatory response, and platelet aggregation. This chain is Dermonecrotic toxin SdSicTox-betaIIB1bxii, found in Sicarius cf. damarensis (strain GJB-2008) (Six-eyed sand spider).